The sequence spans 601 residues: Elongation factor 4 (601 aa).

In terms of domain architecture, tr-type G spans 7 to 189; sequence DNIRNFSIVA…AIVKRLPAPK (183 aa). GTP contacts are provided by residues 19–24 and 136–139; these read DHGKST and NKVD.

Belongs to the TRAFAC class translation factor GTPase superfamily. Classic translation factor GTPase family. LepA subfamily.

It is found in the cell inner membrane. The enzyme catalyses GTP + H2O = GDP + phosphate + H(+). In terms of biological role, required for accurate and efficient protein synthesis under certain stress conditions. May act as a fidelity factor of the translation reaction, by catalyzing a one-codon backward translocation of tRNAs on improperly translocated ribosomes. Back-translocation proceeds from a post-translocation (POST) complex to a pre-translocation (PRE) complex, thus giving elongation factor G a second chance to translocate the tRNAs correctly. Binds to ribosomes in a GTP-dependent manner. This Methylorubrum extorquens (strain CM4 / NCIMB 13688) (Methylobacterium extorquens) protein is Elongation factor 4.